A 290-amino-acid polypeptide reads, in one-letter code: Syntaxin-1A (290 aa).

The segment at 1 to 21 (MTKDRLAALQAAQSDDEDMPE) is disordered. At 1 to 267 (MTKDRLAALQ…KYQSKARRKK (267 aa)) the chain is on the cytoplasmic side. Positions 194 to 256 (LADIEARHAD…QTATQDTKKA (63 aa)) constitute a t-SNARE coiled-coil homology domain. A helical; Anchor for type IV membrane protein membrane pass occupies residues 268 to 289 (IWIAICVLIAIIILVVFLAIYL). Threonine 290 is a topological domain (vesicular).

It belongs to the syntaxin family. Post-translationally, (Microbial infection) Targeted and hydrolyzed by the light chain (LC) of P.bifermentans PMP1. Cleavage probably inhibits neurotransmitter release.

The protein resides in the cytoplasmic vesicle. It is found in the secretory vesicle. The protein localises to the synaptic vesicle membrane. Plays a critical role in several secretory processes. This chain is Syntaxin-1A, found in Anopheles gambiae (African malaria mosquito).